The sequence spans 192 residues: Ion-translocating oxidoreductase complex subunit A (192 aa).

6 consecutive transmembrane segments (helical) span residues 5-25, 39-59, 63-83, 102-122, 134-154, and 171-191; these read ILLI…FLGL, VGMG…AYLV, ILIP…VIAV, LLGI…VALL, VVYG…FAAL, and AIAL…TGLV.

Belongs to the NqrDE/RnfAE family. As to quaternary structure, the complex is composed of six subunits: RnfA, RnfB, RnfC, RnfD, RnfE and RnfG.

It localises to the cell inner membrane. In terms of biological role, part of a membrane-bound complex that couples electron transfer with translocation of ions across the membrane. The protein is Ion-translocating oxidoreductase complex subunit A of Haemophilus influenzae (strain 86-028NP).